A 416-amino-acid polypeptide reads, in one-letter code: Serine hydroxymethyltransferase (416 aa).

Residues leucine 118 and 122-124 (GHL) each bind (6S)-5,6,7,8-tetrahydrofolate. At lysine 226 the chain carries N6-(pyridoxal phosphate)lysine. (6S)-5,6,7,8-tetrahydrofolate is bound by residues glutamate 242 and 350–352 (SPF).

It belongs to the SHMT family. Homodimer. Pyridoxal 5'-phosphate is required as a cofactor.

Its subcellular location is the cytoplasm. The catalysed reaction is (6R)-5,10-methylene-5,6,7,8-tetrahydrofolate + glycine + H2O = (6S)-5,6,7,8-tetrahydrofolate + L-serine. Its pathway is one-carbon metabolism; tetrahydrofolate interconversion. The protein operates within amino-acid biosynthesis; glycine biosynthesis; glycine from L-serine: step 1/1. In terms of biological role, catalyzes the reversible interconversion of serine and glycine with tetrahydrofolate (THF) serving as the one-carbon carrier. This reaction serves as the major source of one-carbon groups required for the biosynthesis of purines, thymidylate, methionine, and other important biomolecules. Also exhibits THF-independent aldolase activity toward beta-hydroxyamino acids, producing glycine and aldehydes, via a retro-aldol mechanism. In Wolinella succinogenes (strain ATCC 29543 / DSM 1740 / CCUG 13145 / JCM 31913 / LMG 7466 / NCTC 11488 / FDC 602W) (Vibrio succinogenes), this protein is Serine hydroxymethyltransferase.